Reading from the N-terminus, the 76-residue chain is Conotoxin Cal5a L1 (76 aa).

Positions 1-22 are cleaved as a signal peptide; that stretch reads MRFYIGLMAALMLTSILRTDSA. Residues 23-42 constitute a propeptide that is removed on maturation; that stretch reads SVDQTGAEGGLALIERVIRQ. Residue Pro-50 is modified to 4-hydroxyproline. A 4-hydroxyproline; in form cal5a, and form cal5b modification is found at Pro-58. Pro-62 is subject to 4-hydroxyproline; in form cal5a, form cal5b, and form cal5c. Pro-64 carries the 4-hydroxyproline; in form cal5a, form cal5b, form cal5c, and form cal5d modification.

In terms of processing, contains 2 disulfide bonds that can be either 'C1-C3, C2-C4' or 'C1-C4, C2-C3', since these disulfide connectivities have been observed for conotoxins with cysteine framework V (for examples, see AC P0DQQ7 and AC P81755). Five different peptides have been described after total venom examination by HPLC-MS. Cal5a is the longest. Cal5b-Cal5e are identical in length but are differentially hydroxylated. It is possible that hydroxylation and proteolysis at position 53 are incomplete in some of these peptides. Expressed by the venom duct.

It is found in the secreted. Its function is as follows. Probable neurotoxin with unknown target. Possibly targets ion channels. The chain is Conotoxin Cal5a L1 from Californiconus californicus (California cone).